The following is a 476-amino-acid chain: tRNA-2-methylthio-N(6)-dimethylallyladenosine synthase (476 aa).

The span at 1 to 14 shows a compositional bias: basic and acidic residues; that stretch reads MTEVVHLHMPEEAR. The segment at 1–20 is disordered; sequence MTEVVHLHMPEEARATQSRD. Residues 26–147 form the MTTase N-terminal domain; the sequence is RRYYVWTVGC…APNPIYQLEE (122 aa). Residues Cys-35, Cys-71, Cys-105, Cys-170, Cys-174, and Cys-177 each contribute to the [4Fe-4S] cluster site. Positions 156-390 constitute a Radical SAM core domain; it reads DHPPVSVHVP…ERLQEQIAAE (235 aa). A TRAM domain is found at 393 to 453; that stretch reads ARFLHQTVEV…PWSLQGVLAR (61 aa).

It belongs to the methylthiotransferase family. MiaB subfamily. Monomer. It depends on [4Fe-4S] cluster as a cofactor.

It is found in the cytoplasm. The catalysed reaction is N(6)-dimethylallyladenosine(37) in tRNA + (sulfur carrier)-SH + AH2 + 2 S-adenosyl-L-methionine = 2-methylsulfanyl-N(6)-dimethylallyladenosine(37) in tRNA + (sulfur carrier)-H + 5'-deoxyadenosine + L-methionine + A + S-adenosyl-L-homocysteine + 2 H(+). Functionally, catalyzes the methylthiolation of N6-(dimethylallyl)adenosine (i(6)A), leading to the formation of 2-methylthio-N6-(dimethylallyl)adenosine (ms(2)i(6)A) at position 37 in tRNAs that read codons beginning with uridine. This Roseiflexus sp. (strain RS-1) protein is tRNA-2-methylthio-N(6)-dimethylallyladenosine synthase.